The following is a 377-amino-acid chain: F-box protein At1g11810 (377 aa).

Residues 2–48 (TTTMSTLPVVLVDEILARVPITSLRSLRSTCKKWEASSKTNLVGGKA) form the F-box domain.

The chain is F-box protein At1g11810 from Arabidopsis thaliana (Mouse-ear cress).